A 175-amino-acid chain; its full sequence is Adenine phosphoribosyltransferase (175 aa).

This sequence belongs to the purine/pyrimidine phosphoribosyltransferase family. Homodimer.

The protein localises to the cytoplasm. It carries out the reaction AMP + diphosphate = 5-phospho-alpha-D-ribose 1-diphosphate + adenine. Its pathway is purine metabolism; AMP biosynthesis via salvage pathway; AMP from adenine: step 1/1. In terms of biological role, catalyzes a salvage reaction resulting in the formation of AMP, that is energically less costly than de novo synthesis. The protein is Adenine phosphoribosyltransferase of Synechococcus sp. (strain CC9902).